The sequence spans 137 residues: Large ribosomal subunit protein uL22 (137 aa).

The protein belongs to the universal ribosomal protein uL22 family. As to quaternary structure, part of the 50S ribosomal subunit.

Its function is as follows. This protein binds specifically to 23S rRNA; its binding is stimulated by other ribosomal proteins, e.g. L4, L17, and L20. It is important during the early stages of 50S assembly. It makes multiple contacts with different domains of the 23S rRNA in the assembled 50S subunit and ribosome. Functionally, the globular domain of the protein is located near the polypeptide exit tunnel on the outside of the subunit, while an extended beta-hairpin is found that lines the wall of the exit tunnel in the center of the 70S ribosome. The chain is Large ribosomal subunit protein uL22 from Flavobacterium johnsoniae (strain ATCC 17061 / DSM 2064 / JCM 8514 / BCRC 14874 / CCUG 350202 / NBRC 14942 / NCIMB 11054 / UW101) (Cytophaga johnsonae).